The sequence spans 1849 residues: Protein TANC1 (1849 aa).

Met1 carries the post-translational modification N-acetylmethionine. Disordered regions lie at residues Met1 to Asp47 and Met59 to Gly109. A compositionally biased stretch (basic and acidic residues) spans Lys8–Gly21. The span at Glu27–Glu46 shows a compositional bias: polar residues. Residues Ser60, Ser63, Ser64, Ser204, Ser267, and Ser455 each carry the phosphoserine modification. Disordered regions lie at residues Asp264–Asn309 and Val430–Arg481. The span at Thr451–Thr468 shows a compositional bias: low complexity. ANK repeat units lie at residues Glu886 to Tyr918, Asn924 to Gly953, Asn957 to His986, Lys990 to Pro1019, Ala1030 to Ile1059, Trp1068 to Arg1097, Arg1101 to Pro1130, Gln1134 to Ser1163, Glu1167 to Gln1196, Asn1200 to His1229, and Ser1233 to Asn1262. TPR repeat units follow at residues Leu1279–Glu1312, Val1326–Ser1359, and Glu1361–Asn1393. The segment covering Leu1410 to Pro1421 has biased composition (low complexity). Disordered stretches follow at residues Leu1410–Ser1503, Asn1527–Gly1605, Gln1635–Thr1711, and Pro1812–Val1849. Phosphoserine is present on residues Ser1429 and Ser1456. Acidic residues predominate over residues Glu1447–Ser1456. Composition is skewed to polar residues over residues Asn1527–Val1546 and Pro1593–Glu1603. The segment covering Ser1649–Ser1679 has biased composition (low complexity). Phosphoserine occurs at positions 1658, 1666, and 1667.

This sequence belongs to the TANC family. As to quaternary structure, interacts probably directly with DLG1, DLG4, HOMER1. Interacts with DLGAP1, INA, CAMK2A, GRIN2B and GRIA1. Interacts with TNIK and MINK1. Post-translationally, phosphorylated; by MINK1 and TNIK upon stimulation by RAP2A. Expressed in heart, lung, liver and kidney. Expressed in brain (at protein level).

The protein resides in the postsynaptic density. In terms of biological role, may be a scaffold component in the postsynaptic density. This chain is Protein TANC1 (Tanc1), found in Rattus norvegicus (Rat).